We begin with the raw amino-acid sequence, 727 residues long: Fatty acid oxidation complex subunit alpha (727 aa).

The tract at residues 1–200 is enoyl-CoA hydratase; the sequence is MNDQQPFSAI…RQGLVDEAVP (200 aa). Residues 316–727 are 3-hydroxyacyl-CoA dehydrogenase; it reads KPIHYVGILG…PPTDEDDSAS (412 aa).

The protein in the N-terminal section; belongs to the enoyl-CoA hydratase/isomerase family. This sequence in the central section; belongs to the 3-hydroxyacyl-CoA dehydrogenase family. Heterotetramer of two alpha chains (FadJ) and two beta chains (FadI).

It is found in the cytoplasm. The catalysed reaction is a (3S)-3-hydroxyacyl-CoA = a (2E)-enoyl-CoA + H2O. It carries out the reaction a 4-saturated-(3S)-3-hydroxyacyl-CoA = a (3E)-enoyl-CoA + H2O. It catalyses the reaction a (3S)-3-hydroxyacyl-CoA + NAD(+) = a 3-oxoacyl-CoA + NADH + H(+). The enzyme catalyses (3S)-3-hydroxybutanoyl-CoA = (3R)-3-hydroxybutanoyl-CoA. It participates in lipid metabolism; fatty acid beta-oxidation. Functionally, catalyzes the formation of a hydroxyacyl-CoA by addition of water on enoyl-CoA. Also exhibits 3-hydroxyacyl-CoA epimerase and 3-hydroxyacyl-CoA dehydrogenase activities. The protein is Fatty acid oxidation complex subunit alpha of Pectobacterium carotovorum subsp. carotovorum (strain PC1).